Reading from the N-terminus, the 338-residue chain is Nicotinate-nucleotide--dimethylbenzimidazole phosphoribosyltransferase (338 aa).

Glu-306 functions as the Proton acceptor in the catalytic mechanism.

Belongs to the CobT family.

The enzyme catalyses 5,6-dimethylbenzimidazole + nicotinate beta-D-ribonucleotide = alpha-ribazole 5'-phosphate + nicotinate + H(+). It participates in nucleoside biosynthesis; alpha-ribazole biosynthesis; alpha-ribazole from 5,6-dimethylbenzimidazole: step 1/2. Its function is as follows. Catalyzes the synthesis of alpha-ribazole-5'-phosphate from nicotinate mononucleotide (NAMN) and 5,6-dimethylbenzimidazole (DMB). This is Nicotinate-nucleotide--dimethylbenzimidazole phosphoribosyltransferase from Cereibacter sphaeroides (strain KD131 / KCTC 12085) (Rhodobacter sphaeroides).